The chain runs to 362 residues: Bifunctional chorismate mutase/prephenate dehydratase (362 aa).

The 89-residue stretch at 3–91 (QTIDELLIPH…ECLAVERPLT (89 aa)) folds into the Chorismate mutase domain. The substrate site is built by Arg13, Arg30, Lys41, and Glu52. A Prephenate dehydratase domain is found at 92 to 269 (IAYLGPQGTF…NTTRFLVMGH (178 aa)). In terms of domain architecture, ACT spans 281–356 (SLAVSAPNRA…RASFVKAIGS (76 aa)).

It localises to the cytoplasm. It carries out the reaction chorismate = prephenate. The catalysed reaction is prephenate + H(+) = 3-phenylpyruvate + CO2 + H2O. Its pathway is amino-acid biosynthesis; L-phenylalanine biosynthesis; phenylpyruvate from prephenate: step 1/1. It participates in metabolic intermediate biosynthesis; prephenate biosynthesis; prephenate from chorismate: step 1/1. Catalyzes the Claisen rearrangement of chorismate to prephenate and the decarboxylation/dehydration of prephenate to phenylpyruvate. The protein is Bifunctional chorismate mutase/prephenate dehydratase (pheA) of Neisseria gonorrhoeae (strain ATCC 700825 / FA 1090).